Reading from the N-terminus, the 346-residue chain is Probable alcohol dehydrogenase AdhA (346 aa).

Residues cysteine 51, histidine 73, cysteine 109, cysteine 112, cysteine 115, cysteine 123, and cysteine 165 each contribute to the Zn(2+) site.

The protein belongs to the zinc-containing alcohol dehydrogenase family. Requires Zn(2+) as cofactor.

The catalysed reaction is a primary alcohol + NAD(+) = an aldehyde + NADH + H(+). It carries out the reaction a secondary alcohol + NAD(+) = a ketone + NADH + H(+). The protein is Probable alcohol dehydrogenase AdhA (adhA) of Mycobacterium tuberculosis (strain CDC 1551 / Oshkosh).